The sequence spans 689 residues: DNA ligase (689 aa).

NAD(+) contacts are provided by residues 40–44 (DAEYD), 89–90 (SL), and Glu121. The N6-AMP-lysine intermediate role is filled by Lys123. Residues Arg144, Glu179, Lys295, and Lys319 each contribute to the NAD(+) site. Zn(2+) contacts are provided by Cys413, Cys416, Cys431, and Cys437. One can recognise a BRCT domain in the interval 610-689 (REQSSLTGKI…AEWLTLVRDI (80 aa)).

It belongs to the NAD-dependent DNA ligase family. LigA subfamily. It depends on Mg(2+) as a cofactor. Mn(2+) serves as cofactor.

The catalysed reaction is NAD(+) + (deoxyribonucleotide)n-3'-hydroxyl + 5'-phospho-(deoxyribonucleotide)m = (deoxyribonucleotide)n+m + AMP + beta-nicotinamide D-nucleotide.. In terms of biological role, DNA ligase that catalyzes the formation of phosphodiester linkages between 5'-phosphoryl and 3'-hydroxyl groups in double-stranded DNA using NAD as a coenzyme and as the energy source for the reaction. It is essential for DNA replication and repair of damaged DNA. The protein is DNA ligase of Rickettsia bellii (strain RML369-C).